Here is a 433-residue protein sequence, read N- to C-terminus: KICSTOR complex protein ITFG2 (433 aa).

One copy of the FG-GAP 1; atypical repeat lies at 19–48; the sequence is FPHAICLGDVDNDTLNELVVGDTSGKVSVY. The residue at position 104 (serine 104) is a Phosphoserine. The stretch at 126–155 is one FG-GAP 2; atypical repeat; the sequence is NTKVMLISDIDGDGCRELVVGYTDRVVRAF. The residue at position 220 (serine 220) is a Phosphoserine.

As to quaternary structure, part of the KICSTOR complex composed of KPTN, ITFG2, KICS2 and SZT2. SZT2 probably serves as a link between the other three proteins in the KICSTOR complex and may mediate the direct interaction with the GATOR complex via GATOR1. The KICSTOR complex interacts directly with the GATOR1 complex and most probably indirectly with the GATOR2 complex in an amino acid-independent manner.

It localises to the lysosome membrane. As part of the KICSTOR complex functions in the amino acid-sensing branch of the TORC1 signaling pathway. Recruits, in an amino acid-independent manner, the GATOR1 complex to the lysosomal membranes and allows its interaction with GATOR2 and the RAG GTPases. Functions upstream of the RAG GTPases and is required to negatively regulate mTORC1 signaling in absence of amino acids. In absence of the KICSTOR complex mTORC1 is constitutively localized to the lysosome and activated. The KICSTOR complex is also probably involved in the regulation of mTORC1 by glucose. This chain is KICSTOR complex protein ITFG2, found in Pongo abelii (Sumatran orangutan).